A 379-amino-acid polypeptide reads, in one-letter code: Protein COS4 (379 aa).

Transmembrane regions (helical) follow at residues I43–W63, I70–I90, I233–R253, and M255–F275.

Belongs to the DUP/COS family.

It localises to the membrane. This is Protein COS4 (COS4) from Saccharomyces cerevisiae (strain ATCC 204508 / S288c) (Baker's yeast).